The primary structure comprises 160 residues: Major pollen allergen Bet v 1-J (160 aa).

4 residues coordinate brassinolide: Lys55, Tyr82, Tyr84, and Asn101. 2 hydrophobic ligand pocket regions span residues 116–118 and 133–141; these read KIN and QIKASKEMG.

This sequence belongs to the BetVI family. In terms of tissue distribution, pollen.

The protein localises to the cytoplasm. Its function is as follows. May be a general steroid carrier protein. This chain is Major pollen allergen Bet v 1-J, found in Betula pendula (European white birch).